Here is a 457-residue protein sequence, read N- to C-terminus: 1-carboxybiuret hydrolase subunit AtzE (457 aa).

Catalysis depends on charge relay system residues K74 and S150. The active-site Acyl-ester intermediate is S174.

It belongs to the amidase family. As to quaternary structure, heterotetramer consisting of 2 AtzE and 2 AtzG subunits.

The catalysed reaction is 1-carboxybiuret + H2O = urea-1,3-dicarboxylate + NH4(+). It functions in the pathway xenobiotic degradation; atrazine degradation. In terms of biological role, hydrolyzes 1-carboxybiuret to urea-1,3-dicarboxylate and NH(3). The chain is 1-carboxybiuret hydrolase subunit AtzE from Pseudomonas sp. (strain ADP).